The sequence spans 381 residues: Homoserine O-succinyltransferase (381 aa).

The AB hydrolase-1 domain occupies 45–360; that stretch reads NAVLVCHALN…PHGHDAFLLD (316 aa). The active-site Nucleophile is the Ser-151. Arg-221 provides a ligand contact to substrate. Active-site residues include Asp-321 and His-354. Residue Asp-355 participates in substrate binding.

Belongs to the AB hydrolase superfamily. MetX family. As to quaternary structure, homodimer.

Its subcellular location is the cytoplasm. The enzyme catalyses L-homoserine + succinyl-CoA = O-succinyl-L-homoserine + CoA. It functions in the pathway amino-acid biosynthesis; L-methionine biosynthesis via de novo pathway; O-succinyl-L-homoserine from L-homoserine: step 1/1. Its function is as follows. Transfers a succinyl group from succinyl-CoA to L-homoserine, forming succinyl-L-homoserine. The sequence is that of Homoserine O-succinyltransferase from Burkholderia vietnamiensis (strain G4 / LMG 22486) (Burkholderia cepacia (strain R1808)).